Consider the following 402-residue polypeptide: Nodulation protein E (402 aa).

Positions 2 to 401 constitute a Ketosynthase family 3 (KS3) domain; it reads DRRVVITGMG…GTNAVLAFKQ (400 aa). Catalysis depends on for beta-ketoacyl synthase activity residues Cys162, His294, and His331. The helical transmembrane segment at 329 to 348 threads the bilayer; that stretch reads HAHCIGAASALEMIACVMAI.

The protein belongs to the thiolase-like superfamily. Beta-ketoacyl-ACP synthases family.

The protein resides in the cell inner membrane. Functionally, proposed to synthesize NOD factor fatty acyl chain. Involved in the synthesis of a highly unsaturated fatty acid moiety, which forms part of a lipo-oligosaccharide that is responsible for host specificity. In Rhizobium meliloti (strain 1021) (Ensifer meliloti), this protein is Nodulation protein E (nodE).